The chain runs to 124 residues: Secretion system apparatus protein SsaP (124 aa).

This Salmonella typhi protein is Secretion system apparatus protein SsaP (ssaP).